The sequence spans 80 residues: uncharacterized protein (80 aa).

It to B.cereus similar ORF in glnR 5'region.

This is an uncharacterized protein from Bacillus cereus.